The following is a 694-amino-acid chain: TBC1 domain family member 14 (694 aa).

Ser92 is modified (phosphoserine). Residues 272 to 289 (TAQKDSKKTQKEYEDKAG) show a composition bias toward basic and acidic residues. Residues 272 to 305 (TAQKDSKKTQKEYEDKAGRPSRPPSPKQNVRKNL) form a disordered region. Ser296 is subject to Phosphoserine. Residues 402–612 (GIPPSVRGKV…RIWDVFCRDG (211 aa)) enclose the Rab-GAP TBC domain.

Interacts with ULK1. May interact with RAB11A and RAB11B, but does not exhibit any GTPase-activating activity toward these proteins. Interacts with TRAPPC8.

It localises to the golgi apparatus. The protein localises to the cis-Golgi network. The protein resides in the trans-Golgi network. Functionally, plays a role in the regulation of starvation-induced autophagosome formation. Together with the TRAPPIII complex, regulates a constitutive trafficking step from peripheral recycling endosomes to the early Golgi, maintaining the cycling pool of ATG9 required for initiation of autophagy. This Mus musculus (Mouse) protein is TBC1 domain family member 14 (Tbc1d14).